The primary structure comprises 582 residues: Ubiquilin-1 (582 aa).

2 disordered regions span residues 1-26 (MAESAESGGPPGAQDSAADSGPAEPK) and 102-136 (RPQDNSAQQTNTTGNSVTSSPAPDSNPTSGPAANS). Position 2 is an N-acetylalanine (alanine 2). Residues 28 to 102 (MKVTVKTPKE…VHLVIKTQNR (75 aa)) form the Ubiquitin-like domain. Residues 102-135 (RPQDNSAQQTNTTGNSVTSSPAPDSNPTSGPAAN) are compositionally biased toward polar residues. The interval 169 to 422 (QLLSNPEMMV…LNNPLFAGNP (254 aa)) is interaction with UBXN4. 2 consecutive STI1 domains span residues 173–201 (NPEMMVQIMENPFVQSMLSNPDLMRQLIM) and 203–242 (NPQMQQLIQRNPEISHMLNNPNIMRQTLELARNPAMMQEM). The segment at 285–365 (NPFASLVSSP…NLVPGAGASM (81 aa)) is disordered. Positions 290-304 (LVSSPSSAEGTQPSR) are enriched in polar residues. The span at 318-346 (QTPQSSPASGSTGSTTNTVSTSAGNATST) shows a compositional bias: low complexity. 2 STI1 domains span residues 381 to 428 (NPQL…QEQM) and 432 to 464 (LPTFLQQMQNPDTLSAMSNPRAMQALLQIQQGL). Residues 481 to 513 (GLAAGNSGGPAGTTAPSTAPGEDTNPQGGAAEP) form a disordered region. The region spanning 539–579 (RFQQQLEQLSAMGFLNREANLQALIATGGDINAAIERLLGS) is the UBA domain.

As to quaternary structure, monomer and homodimer. Heterodimer with UBQLN2. Binds CD47. Binds NBL1. Binds GABRA1, GABRA2, GABRA3, GABRA6, GABRB1, GABRB2 and GABRB3. Binds UBE3A, BTRC, P4HB and MTOR. Interacts with the proteasome 19S subunit. Interacts (via ubiquitin-like domain) with TREX1; the interaction is direct and may control TREX1 subcellular location. Forms a complex with UBXN4 and VCP. Interacts (via UBA domain) with UBQLN4 (via ubiquitin-like domain). Found in a complex with UBQLN2 and MAP1LC3A/B/C. The monomeric form interacts with PSEN1 and PSEN2. Interacts with ORAI1. Interacts (via UBA domain) with TICAM1. Interacts with EPS15. Interacts (via UBA domain) with UBA52 and (via ubiquitin-like domain) with PSMD3 and PSMD4. Interacts with HERPUD1. Interacts with MAP1LC3A/B/C in the presence of UBQLN4. Interacts (via ubiquitin-like domain) with EPS15 (via UIM domains) and both the ubiquitinated and non-ubiquitinated forms can interact with EPS15. Interacts (via ubiquitin-like domain) with EPS15L1, HGS (via UIM domain) and STAM2 (via UIM domain). Interacts with BCL2L10/BCL-B; in the cytoplasm. Post-translationally, degraded during both macroautophagy and during chaperone-mediated autophagy (CMA). In terms of processing, phosphorylated. Ubiquitinated.

It localises to the nucleus. Its subcellular location is the cytoplasm. The protein localises to the endoplasmic reticulum. The protein resides in the cytoplasmic vesicle. It is found in the autophagosome. It localises to the cell membrane. In terms of biological role, plays an important role in the regulation of different protein degradation mechanisms and pathways including ubiquitin-proteasome system (UPS), autophagy and endoplasmic reticulum-associated protein degradation (ERAD) pathway. Mediates the proteasomal targeting of misfolded or accumulated proteins for degradation by binding (via UBA domain) to their polyubiquitin chains and by interacting (via ubiquitin-like domain) with the subunits of the proteasome. Plays a role in the ERAD pathway via its interaction with ER-localized proteins UBXN4, VCP and HERPUD1 and may form a link between the polyubiquitinated ERAD substrates and the proteasome. Plays a role in unfolded protein response (UPR) by attenuating the induction of UPR-inducible genes, DDTI3/CHOP, HSPA5 and PDIA2 during ER stress. Involved in the regulation of macroautophagy and autophagosome formation; required for maturation of autophagy-related protein LC3 from the cytosolic form LC3-I to the membrane-bound form LC3-II and may assist in the maturation of autophagosomes to autolysosomes by mediating autophagosome-lysosome fusion. Negatively regulates the TICAM1/TRIF-dependent toll-like receptor signaling pathway by decreasing the abundance of TICAM1 via the autophagic pathway. Promotes the ubiquitination and lysosomal degradation of ORAI1, consequently down-regulating the ORAI1-mediated Ca2+ mobilization. Suppresses the maturation and proteasomal degradation of amyloid beta A4 protein (A4) by stimulating the lysine 63 (K63)-linked polyubiquitination. Delays the maturation of A4 by sequestering it in the Golgi apparatus and preventing its transport to the cell surface for subsequent processing. Promotes the surface expression of GABA-A receptors. Ubiquitinates BCL2L10 and thereby stabilizes protein abundance. In Rattus norvegicus (Rat), this protein is Ubiquilin-1 (Ubqln1).